Here is a 266-residue protein sequence, read N- to C-terminus: 4-hydroxy-tetrahydrodipicolinate reductase (266 aa).

NAD(+) is bound at residue 10–15; it reads GPRGRM. Lysine 38 lines the NADP(+) pocket. NAD(+)-binding positions include 99–101 and 125–128; these read GTT and APNF. Histidine 155 acts as the Proton donor/acceptor in catalysis. Histidine 156 contacts (S)-2,3,4,5-tetrahydrodipicolinate. The active-site Proton donor is lysine 159. Residue 165–166 coordinates (S)-2,3,4,5-tetrahydrodipicolinate; it reads GT.

This sequence belongs to the DapB family.

It localises to the cytoplasm. It catalyses the reaction (S)-2,3,4,5-tetrahydrodipicolinate + NAD(+) + H2O = (2S,4S)-4-hydroxy-2,3,4,5-tetrahydrodipicolinate + NADH + H(+). The enzyme catalyses (S)-2,3,4,5-tetrahydrodipicolinate + NADP(+) + H2O = (2S,4S)-4-hydroxy-2,3,4,5-tetrahydrodipicolinate + NADPH + H(+). The protein operates within amino-acid biosynthesis; L-lysine biosynthesis via DAP pathway; (S)-tetrahydrodipicolinate from L-aspartate: step 4/4. Its function is as follows. Catalyzes the conversion of 4-hydroxy-tetrahydrodipicolinate (HTPA) to tetrahydrodipicolinate. The protein is 4-hydroxy-tetrahydrodipicolinate reductase of Bacillus cytotoxicus (strain DSM 22905 / CIP 110041 / 391-98 / NVH 391-98).